A 368-amino-acid chain; its full sequence is DNA replication and repair protein RecF (368 aa).

Residue 30 to 37 (GDNGAGKT) coordinates ATP.

Belongs to the RecF family.

Its subcellular location is the cytoplasm. Functionally, the RecF protein is involved in DNA metabolism; it is required for DNA replication and normal SOS inducibility. RecF binds preferentially to single-stranded, linear DNA. It also seems to bind ATP. The polypeptide is DNA replication and repair protein RecF (Xanthomonas oryzae pv. oryzae (strain KACC10331 / KXO85)).